We begin with the raw amino-acid sequence, 340 residues long: Phospho-N-acetylmuramoyl-pentapeptide-transferase (340 aa).

Transmembrane regions (helical) follow at residues 3 to 23 (MSLIAGVAAFVLTVLAMPHFI), 53 to 73 (GGTVFLVVAILISLIFNFHVF), 79 to 99 (AYGATAGILFVILIYGIIGFL), 119 to 139 (MALQIVAGLLFYFIHVLPSGT), 144 to 164 (IGGLTIQLGVFYVLFVLFWIV), 176 to 196 (IDGLASVSVVISLIAYGIIAF), 200 to 220 (ELAILTIIITMIGALLGFFVF), 227 to 247 (VFMGDVGSLSLGAMLAVISIA), 250 to 270 (VEWTLLLIGVVYVLETASVML), and 315 to 335 (VDAFLWTIGALASSITLWMVL).

It belongs to the glycosyltransferase 4 family. MraY subfamily. Mg(2+) serves as cofactor.

It is found in the cell membrane. The enzyme catalyses UDP-N-acetyl-alpha-D-muramoyl-L-alanyl-gamma-D-glutamyl-L-lysyl-D-alanyl-D-alanine + di-trans,octa-cis-undecaprenyl phosphate = Mur2Ac(oyl-L-Ala-gamma-D-Glu-L-Lys-D-Ala-D-Ala)-di-trans,octa-cis-undecaprenyl diphosphate + UMP. It participates in cell wall biogenesis; peptidoglycan biosynthesis. Its function is as follows. Catalyzes the initial step of the lipid cycle reactions in the biosynthesis of the cell wall peptidoglycan: transfers peptidoglycan precursor phospho-MurNAc-pentapeptide from UDP-MurNAc-pentapeptide onto the lipid carrier undecaprenyl phosphate, yielding undecaprenyl-pyrophosphoryl-MurNAc-pentapeptide, known as lipid I. The chain is Phospho-N-acetylmuramoyl-pentapeptide-transferase from Streptococcus thermophilus (strain ATCC BAA-250 / LMG 18311).